A 74-amino-acid polypeptide reads, in one-letter code: ATP synthase subunit 9, mitochondrial (74 aa).

2 helical membrane-spanning segments follow: residues 8–28 and 50–70; these read MGAG…GNVF and ILGF…AFLI.

This sequence belongs to the ATPase C chain family. In terms of assembly, F-type ATPases have 2 components, CF(1) - the catalytic core - and CF(0) - the membrane proton channel. CF(1) has five subunits: alpha(3), beta(3), gamma(1), delta(1), epsilon(1). CF(0) has three main subunits: a, b and c.

It is found in the mitochondrion membrane. Its function is as follows. This protein is one of the chains of the nonenzymatic membrane component (F0) of mitochondrial ATPase. The protein is ATP synthase subunit 9, mitochondrial (ATP9) of Solanum tuberosum (Potato).